The primary structure comprises 166 residues: Vasopressin-neurophysin 2-copeptin (166 aa).

The N-terminal stretch at 1-19 is a signal peptide; it reads MPDATLPACFLSLLAFTSA. C20 and C25 are joined by a disulfide. G28 carries the glycine amide modification. 7 disulfides stabilise this stretch: C41–C85, C44–C58, C52–C75, C59–C65, C92–C104, C98–C116, and C105–C110. An N-linked (GlcNAc...) asparagine glycan is attached at N133.

Belongs to the vasopressin/oxytocin family. In terms of assembly, interacts with vasopressin receptors V1bR/AVPR1B (Ki=85 pM), V1aR/AVPR1A (Ki=0.6 nM) and V2R/AVPR2 (Ki=4.9 nM). Interacts with oxytocin receptor (OXTR) (Ki=110 nM).

The protein resides in the secreted. Functionally, neurophysin 2 specifically binds vasopressin. Its function is as follows. Vasopressin has a direct antidiuretic action on the kidney, it also causes vasoconstriction of the peripheral vessels. Acts by binding to vasopressin receptors (V1bR/AVPR1B, V1aR/AVPR1A, and V2R/AVPR2). The chain is Vasopressin-neurophysin 2-copeptin (AVP) from Bos taurus (Bovine).